The primary structure comprises 387 residues: Gamma-butyrobetaine dioxygenase (387 aa).

Residues Cys-38, Cys-40, Cys-43, and His-82 each coordinate Zn(2+). Residues His-202, Asp-204, and His-347 each coordinate Fe cation. Ser-351 is modified (phosphoserine).

The protein belongs to the gamma-BBH/TMLD family. It depends on Fe(2+) as a cofactor. Requires L-ascorbate as cofactor.

It is found in the cytoplasm. The catalysed reaction is 4-(trimethylamino)butanoate + 2-oxoglutarate + O2 = carnitine + succinate + CO2. The protein operates within amine and polyamine biosynthesis; carnitine biosynthesis. In terms of biological role, catalyzes the formation of L-carnitine from gamma-butyrobetaine. In Pongo abelii (Sumatran orangutan), this protein is Gamma-butyrobetaine dioxygenase (BBOX1).